Here is a 252-residue protein sequence, read N- to C-terminus: Imidazole glycerol phosphate synthase subunit HisF (252 aa).

Catalysis depends on residues Asp-11 and Asp-130.

It belongs to the HisA/HisF family. In terms of assembly, heterodimer of HisH and HisF.

It localises to the cytoplasm. It catalyses the reaction 5-[(5-phospho-1-deoxy-D-ribulos-1-ylimino)methylamino]-1-(5-phospho-beta-D-ribosyl)imidazole-4-carboxamide + L-glutamine = D-erythro-1-(imidazol-4-yl)glycerol 3-phosphate + 5-amino-1-(5-phospho-beta-D-ribosyl)imidazole-4-carboxamide + L-glutamate + H(+). It participates in amino-acid biosynthesis; L-histidine biosynthesis; L-histidine from 5-phospho-alpha-D-ribose 1-diphosphate: step 5/9. In terms of biological role, IGPS catalyzes the conversion of PRFAR and glutamine to IGP, AICAR and glutamate. The HisF subunit catalyzes the cyclization activity that produces IGP and AICAR from PRFAR using the ammonia provided by the HisH subunit. This Geobacillus sp. (strain WCH70) protein is Imidazole glycerol phosphate synthase subunit HisF.